We begin with the raw amino-acid sequence, 860 residues long: Valine--tRNA ligase (860 aa).

Positions 53–63 (PNLTGILHIGH) match the 'HIGH' region motif. The short motif at 527–531 (KMSKS) is the 'KMSKS' region element. Lys-530 lines the ATP pocket. Positions 794 to 860 (QDKTKIVDKL…LKQDKLNSLK (67 aa)) form a coiled coil.

The protein belongs to the class-I aminoacyl-tRNA synthetase family. ValS type 1 subfamily. As to quaternary structure, monomer.

The protein resides in the cytoplasm. The catalysed reaction is tRNA(Val) + L-valine + ATP = L-valyl-tRNA(Val) + AMP + diphosphate. Catalyzes the attachment of valine to tRNA(Val). As ValRS can inadvertently accommodate and process structurally similar amino acids such as threonine, to avoid such errors, it has a 'posttransfer' editing activity that hydrolyzes mischarged Thr-tRNA(Val) in a tRNA-dependent manner. The chain is Valine--tRNA ligase from Mycoplasmoides gallisepticum (strain R(low / passage 15 / clone 2)) (Mycoplasma gallisepticum).